The following is a 416-amino-acid chain: MDKLLIFGGLPLKGEVTISGAKNAALPIMASTLLAQGVHIFKRIPKLRDVFTMTELIKRMGGIVEFNELCKINTIKINKFEASYDLVKTMRASILVLGPLVARFGRAKVSLPGGCAIGARPVNLHINGLQKMGAKISLQEGYIIAKASRLMGTKIYFDIPTVTGTENLMMAATLAKGTTIIENAAKEPEIVDLANYLILMGAKIEGAGTSIIKVEGVDELKPPQEYEIIPDRIETGTFIAIAGACGGDISLKGCRIDHIDAIILKMKDAGISFKEIENGIRVIGPKRLQAVDIKTMPYPGFPTDMQAQFMAMMTVANGTSVIKETIFENRFMHVAELRRMGADITVEGNTATIRGVKKLKGAPVMATDLRASASLVIAGLIAEEETLIDRIYHLDRGYEELDKKLIQLGARIQRIK.

22-23 (KN) provides a ligand contact to phosphoenolpyruvate. Arginine 91 serves as a coordination point for UDP-N-acetyl-alpha-D-glucosamine. Cysteine 115 serves as the catalytic Proton donor. At cysteine 115 the chain carries 2-(S-cysteinyl)pyruvic acid O-phosphothioketal. UDP-N-acetyl-alpha-D-glucosamine-binding residues include aspartate 304 and isoleucine 326.

This sequence belongs to the EPSP synthase family. MurA subfamily.

It localises to the cytoplasm. It catalyses the reaction phosphoenolpyruvate + UDP-N-acetyl-alpha-D-glucosamine = UDP-N-acetyl-3-O-(1-carboxyvinyl)-alpha-D-glucosamine + phosphate. It participates in cell wall biogenesis; peptidoglycan biosynthesis. Functionally, cell wall formation. Adds enolpyruvyl to UDP-N-acetylglucosamine. The polypeptide is UDP-N-acetylglucosamine 1-carboxyvinyltransferase (Thermodesulfovibrio yellowstonii (strain ATCC 51303 / DSM 11347 / YP87)).